We begin with the raw amino-acid sequence, 506 residues long: Bifunctional purine biosynthesis protein PurH (506 aa).

Residues 1–146 form the MGS-like domain; that stretch reads MARLALLSVS…KNFAHLTVLC (146 aa).

This sequence belongs to the PurH family.

The catalysed reaction is (6R)-10-formyltetrahydrofolate + 5-amino-1-(5-phospho-beta-D-ribosyl)imidazole-4-carboxamide = 5-formamido-1-(5-phospho-D-ribosyl)imidazole-4-carboxamide + (6S)-5,6,7,8-tetrahydrofolate. The enzyme catalyses IMP + H2O = 5-formamido-1-(5-phospho-D-ribosyl)imidazole-4-carboxamide. Its pathway is purine metabolism; IMP biosynthesis via de novo pathway; 5-formamido-1-(5-phospho-D-ribosyl)imidazole-4-carboxamide from 5-amino-1-(5-phospho-D-ribosyl)imidazole-4-carboxamide (10-formyl THF route): step 1/1. The protein operates within purine metabolism; IMP biosynthesis via de novo pathway; IMP from 5-formamido-1-(5-phospho-D-ribosyl)imidazole-4-carboxamide: step 1/1. The chain is Bifunctional purine biosynthesis protein PurH from Nostoc sp. (strain PCC 7120 / SAG 25.82 / UTEX 2576).